The sequence spans 387 residues: Probable nitrate transporter NarT (387 aa).

The next 12 helical transmembrane spans lie at 14-34 (TLSL…MPFI), 45-65 (ISVI…PFGY), 69-89 (IVGA…PIFL), 97-117 (GMLM…SVGV), 137-157 (GVGN…AGAI), 161-181 (NTVR…FFLG), 211-231 (WYFI…NFLV), 246-266 (GIFI…GDKF), 268-288 (AVQA…ILSL), 294-314 (LFTI…GLIF), 330-350 (GIVS…ITFV), and 358-378 (HLAF…MIHL).

This sequence belongs to the major facilitator superfamily. Nitrate/nitrite porter (TC 2.A.1.8) family.

Its subcellular location is the cell membrane. Functionally, probably required for nitrate uptake under anoxic conditions. Also possibly involved in excretion of nitrite produced by the dissimilatory reduction of nitrate. The polypeptide is Probable nitrate transporter NarT (narT) (Staphylococcus epidermidis (strain ATCC 35984 / DSM 28319 / BCRC 17069 / CCUG 31568 / BM 3577 / RP62A)).